The chain runs to 448 residues: Solute carrier family 52, riboflavin transporter, member 1 (448 aa).

A run of 5 helical transmembrane segments spans residues 14–34 (LLVALFGMGSWAAVNGIWVEL), 47–67 (LPSYLSVVVALGNLGLLVVTL), 79–99 (VPIQVVQVLSVVGTALLAPLW), 124–144 (ACCTSNVTFLPFLSHLPPPFL), and 147–167 (FFLGQGLSALLPCVLALVQGV). Asn178 is a glycosylation site (N-linked (GlcNAc...) asparagine). A helical transmembrane segment spans residues 191–211 (FPASTFFWALTALLVTSAAAF). Residues 225–267 (TTGGSGPELQLGSPGAEEEEKEEEEALPLQEPPSQAAGTIPGP) are disordered. The span at 240–250 (AEEEEKEEEEA) shows a compositional bias: acidic residues. 5 helical membrane-spanning segments follow: residues 280–300 (AFLLGLMAFTSAVTNGVLPSV), 315–335 (LAVVLGSAANPLACFLAMGVL), 342–362 (LVGLSLLGMLFGAYLMALAIL), 369–389 (VGTTAGVVLVVLSWVLCLCVF), and 407–427 (ALLAAGVAIQVGSLLGAGAMF).

This sequence belongs to the riboflavin transporter family. Widely expressed. Highly expressed in the testis, placenta and small intestine. Expressed at lower level in other tissues.

It is found in the cell membrane. It carries out the reaction riboflavin(in) = riboflavin(out). The activity is strongly inhibited by riboflavin analogs, such as lumiflavin. Weakly inhibited by flavin adenine dinucleotide (FAD). Functionally, plasma membrane transporter mediating the uptake by cells of the water soluble vitamin B2/riboflavin that plays a key role in biochemical oxidation-reduction reactions of the carbohydrate, lipid, and amino acid metabolism. Humans are unable to synthesize vitamin B2/riboflavin and must obtain it via intestinal absorption. (Microbial infection) May function as a cell receptor to retroviral envelopes similar to the porcine endogenous retrovirus (PERV-A). In Homo sapiens (Human), this protein is Solute carrier family 52, riboflavin transporter, member 1.